Here is a 176-residue protein sequence, read N- to C-terminus: Protein singles bar (176 aa).

Transmembrane regions (helical) follow at residues 13-35 (LGIR…LSRI), 71-91 (FLAT…CYAF), 111-131 (LASC…VVWL), and 140-160 (GFWA…AGIL). One can recognise an MARVEL domain in the interval 30 to 173 (FVLSRIGLLK…DAYLAFRHFR (144 aa)).

The protein localises to the membrane. Essential for myoblast fusion in developing embryos and pupae, and consequently is essential for muscle formation in adults. Required for progression past the pre-fusion complex stage of myoblast fusion. The chain is Protein singles bar from Drosophila melanogaster (Fruit fly).